Consider the following 200-residue polypeptide: Recombination protein RecR (200 aa).

The C4-type zinc finger occupies 57 to 72; the sequence is CSQCRDFTEEDTCNIC. In terms of domain architecture, Toprim spans 81–176; it reads GLLCVVEMPA…KVSRIAHGIP (96 aa).

This sequence belongs to the RecR family.

Its function is as follows. May play a role in DNA repair. It seems to be involved in an RecBC-independent recombinational process of DNA repair. It may act with RecF and RecO. The chain is Recombination protein RecR from Haemophilus influenzae (strain 86-028NP).